Reading from the N-terminus, the 239-residue chain is uncharacterized protein (239 aa).

The next 4 helical transmembrane spans lie at 9–29 (LAIYPIAYVLWGGLMWYSQII), 65–85 (IIYLYGFSSMIIGGIAYYLFI), 94–114 (IILIDLALGWLFAGLIYTFVV), and 167–187 (IYFALAILIPISTLIMGMHWI).

Its subcellular location is the cell membrane. This is an uncharacterized protein from Methanocaldococcus jannaschii (strain ATCC 43067 / DSM 2661 / JAL-1 / JCM 10045 / NBRC 100440) (Methanococcus jannaschii).